A 153-amino-acid chain; its full sequence is 3-hydroxyacyl-[acyl-carrier-protein] dehydratase FabZ (153 aa).

Histidine 47 is a catalytic residue.

The protein belongs to the thioester dehydratase family. FabZ subfamily.

It localises to the cytoplasm. The catalysed reaction is a (3R)-hydroxyacyl-[ACP] = a (2E)-enoyl-[ACP] + H2O. Its function is as follows. Involved in unsaturated fatty acids biosynthesis. Catalyzes the dehydration of short chain beta-hydroxyacyl-ACPs and long chain saturated and unsaturated beta-hydroxyacyl-ACPs. The protein is 3-hydroxyacyl-[acyl-carrier-protein] dehydratase FabZ of Myxococcus xanthus (strain DK1622).